Reading from the N-terminus, the 189-residue chain is UPF0301 protein RF_0044 (189 aa).

This sequence belongs to the UPF0301 (AlgH) family.

This chain is UPF0301 protein RF_0044, found in Rickettsia felis (strain ATCC VR-1525 / URRWXCal2) (Rickettsia azadi).